The chain runs to 109 residues: Irditoxin subunit A (109 aa).

The signal sequence occupies residues 1 to 19 (MKTLLLAVAVVAFVCLGSA). A propeptide spanning residues 20–34 (DQLGLGRQQIDWGQG) is cleaved from the precursor. Glutamine 35 is modified (pyrrolidone carboxylic acid). 5 cysteine pairs are disulfide-bonded: cysteine 44–cysteine 66, cysteine 47–cysteine 55, cysteine 61–cysteine 85, cysteine 89–cysteine 100, and cysteine 101–cysteine 106.

The protein belongs to the three-finger toxin family. Ancestral subfamily. Boigatoxin sub-subfamily. Heterodimer of A and B chains; disulfide-linked. In terms of tissue distribution, expressed by the venom gland.

Its subcellular location is the secreted. Its function is as follows. This bird and reptile-specific postsynaptic neurotoxin inhibits the chick muscle alpha-1-beta-1-gamma-delta (CHRNA1-CHRNB1-CHRNG-CHNRD) nicotinic acetylcholine receptor (nAChR) 100-fold more compared with the mouse receptor. In vivo, produces rapid flaccid paralysis, dyspnea and increased respiratory rate in geckos. At sublethal doses geckos were immobilized for up to three days and then recovered. Chicks injected with lethal doses showed rapid onset of inactivity, dyspnea and neck droop, and no extended paralysis with survival was seen. This Boiga irregularis (Brown tree snake) protein is Irditoxin subunit A.